A 610-amino-acid polypeptide reads, in one-letter code: T-cell immunomodulatory protein (610 aa).

Positions 1-32 (MAAGLLPSARAVLALLFLGLALLSVGPAPAQA) are cleaved as a signal peptide. N-linked (GlcNAc...) asparagine glycans are attached at residues Asn-35, Asn-94, Asn-123, Asn-138, Asn-145, Asn-150, Asn-175, and Asn-241. An FG-GAP 1; atypical repeat occupies 98–135 (LVTSVVPGDYDGDSQMDVLLTYFPQNHSNNELGAVIFW). One copy of the FG-GAP 2; atypical repeat lies at 153 to 183 (FHDQPLIMDFNGDLIPDVFAITNESSQPQIL). The FG-GAP 3; atypical repeat unit spans residues 256 to 291 (VVGQSAFADFDGDGHMDHLLPGCEDKDCQKSAIYLM). N-linked (GlcNAc...) asparagine glycosylation is found at Asn-351, Asn-369, and Asn-480. The chain crosses the membrane as a helical span at residues 564–584 (IVLLTAVALTGVCVFILAIIA).

Belongs to the TIP family. In terms of assembly, interacts with RUVBL1, RUVBL2 and alpha-tubulin.

It localises to the secreted. Its subcellular location is the cell membrane. In terms of biological role, modulator of T-cell function. Has a protective effect in graft versus host disease model. The polypeptide is T-cell immunomodulatory protein (Rattus norvegicus (Rat)).